The sequence spans 1206 residues: uncharacterized protein (1206 aa).

Disordered stretches follow at residues 133 to 547 (YDLD…PVDY), 568 to 837 (FASS…DQLL), and 859 to 1206 (RQRA…KATS). 2 stretches are compositionally biased toward pro residues: residues 139–151 (IPPP…PGPP) and 159–234 (GESP…PPAP). The residue at position 255 (serine 255) is a Phosphoserine. The span at 305–319 (VRTSSIPVQEAPGAS) shows a compositional bias: low complexity. Positions 351 to 363 (RALEPEQPREPRP) are enriched in basic and acidic residues. Residues 384-413 (APPPAPPLPPPAPPLPPPAPSLPPAAPPLP) show a composition bias toward pro residues. Positions 414 to 436 (STELAAPPSSGFMKTSKSNSPAL) are enriched in low complexity. Residues 454 to 467 (VDWRDPRQMEKLRS) show a composition bias toward basic and acidic residues. Residues 522–531 (PEKSPSSSSL) are compositionally biased toward low complexity. Over residues 568–577 (FASSAEKEAK) the composition is skewed to basic and acidic residues. The span at 656-671 (LPKATPGLTLPLKPTP) shows a compositional bias: low complexity. Position 680 is a phosphothreonine (threonine 680). Over residues 732–747 (AEKDLASVRQREKPET) the composition is skewed to basic and acidic residues. The segment covering 1001–1016 (IPPPPEFSNDPEPPAP) has biased composition (pro residues). Positions 1028 to 1041 (PRNNFSDLGQSWGP) are enriched in polar residues. Residues arginine 1051, arginine 1083, and arginine 1094 each carry the omega-N-methylarginine modification. Residues 1170-1184 (PHGNTHYGSPINTFT) show a composition bias toward polar residues.

This is an uncharacterized protein from Mus musculus (Mouse).